Reading from the N-terminus, the 210-residue chain is LexA repressor (210 aa).

The H-T-H motif DNA-binding region spans 30–50 (RVEIAREIGFKSPNAAEEHLK). Residues serine 127 and lysine 164 each act as for autocatalytic cleavage activity in the active site.

It belongs to the peptidase S24 family. Homodimer.

It carries out the reaction Hydrolysis of Ala-|-Gly bond in repressor LexA.. In terms of biological role, represses a number of genes involved in the response to DNA damage (SOS response), including recA and lexA. In the presence of single-stranded DNA, RecA interacts with LexA causing an autocatalytic cleavage which disrupts the DNA-binding part of LexA, leading to derepression of the SOS regulon and eventually DNA repair. In Actinobacillus pleuropneumoniae serotype 5b (strain L20), this protein is LexA repressor.